Reading from the N-terminus, the 710-residue chain is Chloride channel protein CLC-e (710 aa).

Helical transmembrane passes span 74–94 (ELAI…VVLF), 122–142 (IGSN…VVSI), 164–184 (VKAV…LGTG), 193–213 (SVEI…KSPQ), 222–242 (GSAA…FFAV), 261–281 (TTSM…IGLG), 296–316 (PGEL…SLAL), 340–360 (VFPV…PEVL), 379–399 (GLSA…TAWC), 412–432 (SLFI…LALA), 451–471 (GLVG…TAVL), and 472–492 (LLFE…AVGM). Residues 500 to 534 (QSKRQETRETKETRKRKSQEAVQSLTSSDDESSTN) form a disordered region. Residues 502 to 511 (KRQETRETKE) are compositionally biased toward basic and acidic residues. The span at 520 to 534 (AVQSLTSSDDESSTN) shows a compositional bias: polar residues. CBS domains follow at residues 565-624 (MRTR…GNNR) and 640-702 (KCKV…ATRM). The chain crosses the membrane as a helical span at residues 667–687 (HVAVVSGSIDAPRIHPVGVLD).

This sequence belongs to the chloride channel (TC 2.A.49) family. In terms of assembly, homodimer.

The protein localises to the membrane. The enzyme catalyses 2 chloride(in) + H(+)(out) = 2 chloride(out) + H(+)(in). In terms of biological role, voltage-gated thylakoid chloride (Cl) channel/transporter involved in chloride homeostasis after transition from light to dark. Influences chloroplast ultrastructure and subsequent photosynthetic electron transport. During photosynthetic response on transition from dark to low light, involved in a sequential mechanism of adaptation; VCCN1 and CLCe first trigger the activation of photoprotection, which is later down-regulated by KEA3 to a low steady state, while adjusting electron transport. Regulates photosynthesis by a pH-independent mechanism likely involving Cl(-) homeostasis. The sequence is that of Chloride channel protein CLC-e from Arabidopsis thaliana (Mouse-ear cress).